Here is a 416-residue protein sequence, read N- to C-terminus: E3 ubiquitin-protein ligase makorin-2 (416 aa).

C3H1-type zinc fingers lie at residues 2-29 (STKQVTCRYFMHGVCREGSQCLFSHDLA) and 31-58 (SKPSTICKYYQKGYCAYGARCRYDHTKP). Residues 61-144 (AAGGAVGPAP…DPQTSPEMKP (84 aa)) form a disordered region. Positions 95–123 (HSNEPGKREKKTLVLRDRNLTGLAEDKTP) are enriched in basic and acidic residues. Ser139 bears the Phosphoserine mark. Residues 165–192 (SNEPQLCPYAAAGECRFGDACVYLHGDM) form a C3H1-type 3 zinc finger. The interval 193–222 (CEICRLQVLHPFDPEQRKAHEKMCMSTFEH) is makorin-type Cys-His. The RING-type zinc-finger motif lies at 238 to 292 (CSICMEVILEKASASERRFGILSNCSHTYCLSCIRQWRCAKQFENPIIKSCPECR). The segment at 321–350 (GMGKKACKYFEQGKGTCPFGSKCLYRHAYP) adopts a C3H1-type 4 zinc-finger fold.

In terms of assembly, interacts with PDLIM2 (via LIM zinc-binding domain). Interacts with RELA. In terms of tissue distribution, highly expressed in the testis, and lower expression in the brain, thymus, heart, lung, liver, spleen, kidney, ovary, uterus, and seminal vesicle (at protein level). Expressed in primary immune cells, such as CD4-positive and CD8-positive T cells, CD19-positive B cells and CD11c-positive dendritic cells, and in embryonic fibroblasts (at protein level).

The protein localises to the cytoplasm. Its subcellular location is the nucleus. It carries out the reaction S-ubiquitinyl-[E2 ubiquitin-conjugating enzyme]-L-cysteine + [acceptor protein]-L-lysine = [E2 ubiquitin-conjugating enzyme]-L-cysteine + N(6)-ubiquitinyl-[acceptor protein]-L-lysine.. The protein operates within protein modification; protein ubiquitination. Its function is as follows. E3 ubiquitin ligase catalyzing the covalent attachment of ubiquitin moieties onto substrate proteins. Promotes the polyubiquitination and proteasome-dependent degradation of RELA/p65, thereby suppressing RELA-mediated NF-kappa-B transactivation and negatively regulating inflammatory responses. Plays a role in the regulation of spermiation and in male fertility. The protein is E3 ubiquitin-protein ligase makorin-2 (Mkrn2) of Mus musculus (Mouse).